The sequence spans 59 residues: Eag protein (59 aa).

This chain is Eag protein (eag), found in Salmonella phage P22 (Bacteriophage P22).